Consider the following 121-residue polypeptide: Basic phospholipase A2 homolog (121 aa).

7 disulfides stabilise this stretch: cysteine 26–cysteine 115, cysteine 28–cysteine 44, cysteine 43–cysteine 95, cysteine 49–cysteine 121, cysteine 50–cysteine 88, cysteine 57–cysteine 81, and cysteine 75–cysteine 86.

Belongs to the phospholipase A2 family. Group II subfamily. K49 sub-subfamily. As to quaternary structure, homodimer. Expressed by the venom gland.

Its subcellular location is the secreted. Snake venom phospholipase A2 homolog that lacks enzymatic activity, but has myotoxic and cytolytic activities. This Metlapilcoatlus nummifer (Mexican jumping pitviper) protein is Basic phospholipase A2 homolog.